A 553-amino-acid polypeptide reads, in one-letter code: Transcriptional regulator HilA (553 aa).

A DNA-binding region (ompR/PhoB-type) is located at residues 11–107; the sequence is NKKFVFDDFI…LYGQGYRFNR (97 aa). Aspartate 62 carries the post-translational modification 4-aspartylphosphate. Residues 372–405 form a TPR repeat; it reads ADIKYYYGWNLFMAGQLEEALQTINECLKLDPTR.

The main transcriptional regulator of the Salmonella pathogenicity island 1 (SPI1) gene expression. Activates the expression of invasion genes by a direct action at their promoters and also indirectly by increasing the level of InvF. Also binds upstream of prgH and directly activates the expression of prgHIJK operon. The polypeptide is Transcriptional regulator HilA (hilA) (Salmonella typhimurium (strain LT2 / SGSC1412 / ATCC 700720)).